Here is a 460-residue protein sequence, read N- to C-terminus: ATP synthase subunit beta (460 aa).

150-157 (GGAGVGKT) is an ATP binding site.

The protein belongs to the ATPase alpha/beta chains family. As to quaternary structure, F-type ATPases have 2 components, CF(1) - the catalytic core - and CF(0) - the membrane proton channel. CF(1) has five subunits: alpha(3), beta(3), gamma(1), delta(1), epsilon(1). CF(0) has three main subunits: a(1), b(2) and c(9-12). The alpha and beta chains form an alternating ring which encloses part of the gamma chain. CF(1) is attached to CF(0) by a central stalk formed by the gamma and epsilon chains, while a peripheral stalk is formed by the delta and b chains.

It is found in the cell inner membrane. The catalysed reaction is ATP + H2O + 4 H(+)(in) = ADP + phosphate + 5 H(+)(out). Its function is as follows. Produces ATP from ADP in the presence of a proton gradient across the membrane. The catalytic sites are hosted primarily by the beta subunits. This chain is ATP synthase subunit beta, found in Yersinia pestis bv. Antiqua (strain Angola).